The primary structure comprises 334 residues: Tryptophan--tRNA ligase (334 aa).

Residues Gln-11–Thr-13 and Gly-19–Asn-20 contribute to the ATP site. The short motif at Pro-12–Asn-20 is the 'HIGH' region element. Asp-135 lines the L-tryptophan pocket. Residues Gly-147–Asp-149, Ile-186, and Lys-195–Ser-199 contribute to the ATP site. A 'KMSKS' region motif is present at residues Lys-195 to Ser-199.

It belongs to the class-I aminoacyl-tRNA synthetase family. Homodimer.

The protein resides in the cytoplasm. The catalysed reaction is tRNA(Trp) + L-tryptophan + ATP = L-tryptophyl-tRNA(Trp) + AMP + diphosphate + H(+). Catalyzes the attachment of tryptophan to tRNA(Trp). This is Tryptophan--tRNA ligase from Blochmanniella floridana.